The chain runs to 116 residues: Ig heavy chain V region 3-6 (116 aa).

The signal sequence occupies residues 1–18 (MKVLSLLYLLTAIPGILS). The tract at residues 19–48 (DVQLQESGPGLVKPSQSLSLTCSVTGYSIT) is framework-1. C40 and C114 are disulfide-bonded. Positions 49–53 (SGYYW) are complementarity-determining-1. Residues 54-67 (NWIRQFPGNKLEWM) form a framework-2 region. A complementarity-determining-2 region spans residues 68-84 (GYISYDGSNNYNPSLKN). Residues 85–116 (RISITRDTSKNQFFLKLNSVTTEDTATYYCAR) form a framework-3 region.

In Mus musculus (Mouse), this protein is Ig heavy chain V region 3-6 (Ighv3-6).